The following is a 508-amino-acid chain: UTP--glucose-1-phosphate uridylyltransferase (508 aa).

S13 bears the Phosphoserine mark. UTP is bound by residues L113–G116, K127, Q190, and G222. Substrate is bound at residue G115–G116. K127 contributes to the Mg(2+) binding site. Residues H223 and N251–D253 contribute to the substrate site. Residues D253 and K396 each coordinate UTP. Residue D253 participates in Mg(2+) binding. Residue K396 is part of the active site. T426 is subject to Phosphothreonine. A Phosphoserine modification is found at S434. The residue at position 438 (K438) is an N6-acetyllysine. Residues S448 and S461 each carry the phosphoserine modification. The segment at H457–H508 is oligomerization. The tract at residues N502–L503 is critical for end-to-end subunit interaction.

The protein belongs to the UDPGP type 1 family. As to quaternary structure, homooctamer.

The protein localises to the cytoplasm. The enzyme catalyses alpha-D-glucose 1-phosphate + UTP + H(+) = UDP-alpha-D-glucose + diphosphate. It functions in the pathway glycan biosynthesis; glycogen biosynthesis. Functionally, UTP--glucose-1-phosphate uridylyltransferase catalyzing the conversion of glucose-1-phosphate into UDP-glucose, a crucial precursor for the production of glycogen. This chain is UTP--glucose-1-phosphate uridylyltransferase (Ugp2), found in Mus musculus (Mouse).